The following is a 172-amino-acid chain: Translation initiation factor IF-3 (172 aa).

This sequence belongs to the IF-3 family. In terms of assembly, monomer.

It is found in the cytoplasm. IF-3 binds to the 30S ribosomal subunit and shifts the equilibrium between 70S ribosomes and their 50S and 30S subunits in favor of the free subunits, thus enhancing the availability of 30S subunits on which protein synthesis initiation begins. The protein is Translation initiation factor IF-3 of Lactobacillus johnsonii (strain CNCM I-12250 / La1 / NCC 533).